Consider the following 1529-residue polypeptide: Protein STU1 (1529 aa).

Disordered stretches follow at residues 266–314, 617–638, 651–745, and 1070–1090; these read SMGR…DEQI, KPRT…ARKA, KELR…SQGI, and SAND…TSPI. Low complexity predominate over residues 273–290; sequence TISSNSSTPASLSSSTMS. Composition is skewed to polar residues over residues 295-308 and 619-634; these read RTNF…ISPS and RTIT…SSLT. Low complexity predominate over residues 660–674; the sequence is TSISRPSSRINSTSS. Residues 708-723 show a composition bias toward polar residues; that stretch reads TPSTSSLSRVESNQDA.

It belongs to the CLASP family. As to quaternary structure, interacts with microtubules.

The protein resides in the cytoplasm. It localises to the cytoskeleton. Its subcellular location is the nucleus. It is found in the spindle. Microtubule binding protein that promotes the stabilization of dynamic microtubules. Required for mitotic spindle formation. This Debaryomyces hansenii (strain ATCC 36239 / CBS 767 / BCRC 21394 / JCM 1990 / NBRC 0083 / IGC 2968) (Yeast) protein is Protein STU1 (STU1).